The chain runs to 199 residues: Probable NADH dehydrogenase [ubiquinone] iron-sulfur protein 7, mitochondrial (199 aa).

4 residues coordinate [4Fe-4S] cluster: cysteine 74, cysteine 75, cysteine 139, and cysteine 169.

This sequence belongs to the complex I 20 kDa subunit family. In terms of assembly, complex I is composed of 45 different subunits This is a component of the iron-sulfur (IP) fragment of the enzyme. [4Fe-4S] cluster serves as cofactor.

The protein localises to the mitochondrion. The enzyme catalyses a ubiquinone + NADH + 5 H(+)(in) = a ubiquinol + NAD(+) + 4 H(+)(out). Functionally, core subunit of the mitochondrial membrane respiratory chain NADH dehydrogenase (Complex I) that is believed to belong to the minimal assembly required for catalysis. Complex I functions in the transfer of electrons from NADH to the respiratory chain. The immediate electron acceptor for the enzyme is believed to be ubiquinone. In Caenorhabditis elegans, this protein is Probable NADH dehydrogenase [ubiquinone] iron-sulfur protein 7, mitochondrial (nduf-7).